Reading from the N-terminus, the 297-residue chain is MENLLSTVNAILITGPTASGKSALAVELAKRHDGAVVNADSMQVYDTLRVLTARPSKEEMQGVPHHLYGHVPAGAAYSTGAWLRDVSALLPALRDAGRLPVFVGGTGLYFKALTGGLSDMPEIPETLREKLRTRLLQEGPDGLHAELAVADPAMAASLNRQDGQRIVRALEVMKATGRSIADFQGRSGPVIIDAAEARKIVVLPDRAVLHQRINGRFEKMLQQGAEDEVRALLALDMPAEAPVMKAIGVSQIVAMLRGEMTRGEVLEKGAAATRQYAKRQMTWFRNQMDDSWERLTV.

Gly-15–Ser-22 serves as a coordination point for ATP. Residue Thr-17 to Ser-22 coordinates substrate. 2 interaction with substrate tRNA regions span residues Asp-40 to Gln-43 and Gln-164 to Arg-168.

It belongs to the IPP transferase family. In terms of assembly, monomer. Requires Mg(2+) as cofactor.

The enzyme catalyses adenosine(37) in tRNA + dimethylallyl diphosphate = N(6)-dimethylallyladenosine(37) in tRNA + diphosphate. Its function is as follows. Catalyzes the transfer of a dimethylallyl group onto the adenine at position 37 in tRNAs that read codons beginning with uridine, leading to the formation of N6-(dimethylallyl)adenosine (i(6)A). This Rhizobium johnstonii (strain DSM 114642 / LMG 32736 / 3841) (Rhizobium leguminosarum bv. viciae) protein is tRNA dimethylallyltransferase.